Here is a 229-residue protein sequence, read N- to C-terminus: Triosephosphate isomerase (229 aa).

A substrate-binding site is contributed by 6 to 8 (NFK). H88 acts as the Electrophile in catalysis. The active-site Proton acceptor is E157. The substrate site is built by G163 and S193.

This sequence belongs to the triosephosphate isomerase family. Homodimer.

It is found in the cytoplasm. It carries out the reaction D-glyceraldehyde 3-phosphate = dihydroxyacetone phosphate. It functions in the pathway carbohydrate biosynthesis; gluconeogenesis. It participates in carbohydrate degradation; glycolysis; D-glyceraldehyde 3-phosphate from glycerone phosphate: step 1/1. Functionally, involved in the gluconeogenesis. Catalyzes stereospecifically the conversion of dihydroxyacetone phosphate (DHAP) to D-glyceraldehyde-3-phosphate (G3P). In Sulfurovum sp. (strain NBC37-1), this protein is Triosephosphate isomerase.